The following is a 122-amino-acid chain: Large ribosomal subunit protein uL18 (122 aa).

The span at 1–21 shows a compositional bias: basic residues; sequence MSKLSRKQQTQKRHRRLRRHI. The interval 1–25 is disordered; sequence MSKLSRKQQTQKRHRRLRRHITGTS.

Belongs to the universal ribosomal protein uL18 family. In terms of assembly, part of the 50S ribosomal subunit; part of the 5S rRNA/L5/L18/L25 subcomplex. Contacts the 5S and 23S rRNAs.

Functionally, this is one of the proteins that bind and probably mediate the attachment of the 5S RNA into the large ribosomal subunit, where it forms part of the central protuberance. This Synechococcus sp. (strain CC9902) protein is Large ribosomal subunit protein uL18.